The chain runs to 744 residues: Tripartite motif-containing protein 2 (744 aa).

Serine 10 carries the post-translational modification Phosphoserine. The RING-type zinc finger occupies 23-64; the sequence is CSICLERYKNPKVLPCLHTFCERCLQNYIPAHSLTLSCPVCR. The B box-type zinc-finger motif lies at 113–154; that stretch reads GKPLSCPNHDGNVMEFYCQSCETAMCRECTEGEHAEHPTVPL. Zn(2+) contacts are provided by cysteine 118, histidine 121, cysteine 141, and histidine 146. A Filamin repeat occupies 320-421; sequence TTNAVASETV…IRGSPFKLKV (102 aa). The residue at position 371 (threonine 371) is a Phosphothreonine. Serine 375, serine 424, and serine 428 each carry phosphoserine. Residues 432–462 are disordered; that stretch reads EGVKRRVKSPGSGHVKQKAVKRPASMYSTGK. 6 NHL repeats span residues 473–516, 520–563, 564–605, 609–652, 656–699, and 700–743; these read IFRV…FSND, KSRF…FSND, GKFK…FQPN, VTRF…FNQE, MLKF…FDGS, and GSFL…YRYL.

The protein belongs to the TRIM/RBCC family. In terms of assembly, forms homooligomers. Interacts with TRIM3; this interaction reduces TRIM2 activity. Interacts with myosin V; myosin V may not be a substrate for ubiquitination. Interacts with NEFL. Interacts with phosphorylated BCL2L11. Interacts with SIRPA. Post-translationally, RING-type zinc finger-dependent and UBE2D1-dependent autoubiquitination.

It catalyses the reaction S-ubiquitinyl-[E2 ubiquitin-conjugating enzyme]-L-cysteine + [acceptor protein]-L-lysine = [E2 ubiquitin-conjugating enzyme]-L-cysteine + N(6)-ubiquitinyl-[acceptor protein]-L-lysine.. The protein operates within protein modification; protein ubiquitination. In terms of biological role, UBE2D1-dependent E3 ubiquitin-protein ligase that mediates the ubiquitination of NEFL and of phosphorylated BCL2L11. Plays a neuroprotective function. May play a role in neuronal rapid ischemic tolerance. Plays a role in antiviral immunity and limits New World arenavirus infection independently of its ubiquitin ligase activity. This Rattus norvegicus (Rat) protein is Tripartite motif-containing protein 2 (Trim2).